The chain runs to 178 residues: Protein GrpE (178 aa).

Over residues 1–11 the composition is skewed to pro residues; that stretch reads MSENQNPPPSP. A disordered region spans residues 1-23; sequence MSENQNPPPSPEEIEAAMSANAA.

Belongs to the GrpE family. Homodimer.

The protein resides in the cytoplasm. Functionally, participates actively in the response to hyperosmotic and heat shock by preventing the aggregation of stress-denatured proteins, in association with DnaK and GrpE. It is the nucleotide exchange factor for DnaK and may function as a thermosensor. Unfolded proteins bind initially to DnaJ; upon interaction with the DnaJ-bound protein, DnaK hydrolyzes its bound ATP, resulting in the formation of a stable complex. GrpE releases ADP from DnaK; ATP binding to DnaK triggers the release of the substrate protein, thus completing the reaction cycle. Several rounds of ATP-dependent interactions between DnaJ, DnaK and GrpE are required for fully efficient folding. This is Protein GrpE from Acidovorax sp. (strain JS42).